Here is a 317-residue protein sequence, read N- to C-terminus: Metaxin-1 (317 aa).

Glycyl lysine isopeptide (Lys-Gly) (interchain with G-Cter in ubiquitin) cross-links involve residues K38, K41, and K78. Residues 164–184 (EELEKELYQEAQECLTLLSQR) form a helical membrane-spanning segment.

Belongs to the metaxin family. Interacts with MTX2/metaxin-2. Associates with the mitochondrial contact site and cristae organizing system (MICOS) complex, composed of at least MICOS10/MIC10, CHCHD3/MIC19, CHCHD6/MIC25, APOOL/MIC27, IMMT/MIC60, APOO/MIC23/MIC26 and QIL1/MIC13. This complex was also known under the names MINOS or MitOS complex. The MICOS complex associates with mitochondrial outer membrane proteins SAMM50, MTX1 and MTX2 (together described as components of the mitochondrial outer membrane sorting assembly machinery (SAM) complex) and DNAJC11, mitochondrial inner membrane protein TMEM11 and with HSPA9. The MICOS and SAM complexes together with DNAJC11 are part of a large protein complex spanning both membranes termed the mitochondrial intermembrane space bridging (MIB) complex. Interacts with ARMC1. Post-translationally, ubiquitinated by PRKN during mitophagy, leading to its degradation and enhancement of mitophagy. Deubiquitinated by USP30.

It is found in the mitochondrion outer membrane. Involved in transport of proteins into the mitochondrion. Essential for embryonic development. This chain is Metaxin-1 (MTX1), found in Bos taurus (Bovine).